The sequence spans 183 residues: Peptide methionine sulfoxide reductase MsrA 1 (183 aa).

Cysteine 12 is an active-site residue.

The protein belongs to the MsrA Met sulfoxide reductase family.

The enzyme catalyses L-methionyl-[protein] + [thioredoxin]-disulfide + H2O = L-methionyl-(S)-S-oxide-[protein] + [thioredoxin]-dithiol. It carries out the reaction [thioredoxin]-disulfide + L-methionine + H2O = L-methionine (S)-S-oxide + [thioredoxin]-dithiol. In terms of biological role, has an important function as a repair enzyme for proteins that have been inactivated by oxidation. Catalyzes the reversible oxidation-reduction of methionine sulfoxide in proteins to methionine. The protein is Peptide methionine sulfoxide reductase MsrA 1 (msrA1) of Lactococcus lactis subsp. lactis (strain IL1403) (Streptococcus lactis).